Reading from the N-terminus, the 2111-residue chain is Fatty acid synthase beta subunit aflB (2111 aa).

The acetyltransferase (AT) domain stretch occupies residues Ile200–Leu565. The interval Ser618–Asp863 is enoyl reductase (ER) domain. A dehydratase (DH) domain region spans residues Gly1195–Ile1688. One can recognise a MaoC-like domain in the interval Glu1606–Ser1708. The malonyl/palmitoyl transferase (MT/PT) domain stretch occupies residues Tyr1727–Ser2091.

Belongs to the fungal fatty acid synthetase subunit beta family. [Alpha(6)beta(6)] hexamers of two multifunctional subunits (alpha and beta).

The enzyme catalyses acetyl-CoA + n malonyl-CoA + 2n NADPH + 4n H(+) = a long-chain-acyl-CoA + n CoA + n CO2 + 2n NADP(+).. The catalysed reaction is holo-[ACP] + acetyl-CoA = acetyl-[ACP] + CoA. It catalyses the reaction holo-[ACP] + malonyl-CoA = malonyl-[ACP] + CoA. It carries out the reaction a (3R)-hydroxyacyl-[ACP] = a (2E)-enoyl-[ACP] + H2O. The enzyme catalyses a 2,3-saturated acyl-[ACP] + NAD(+) = a (2E)-enoyl-[ACP] + NADH + H(+). The catalysed reaction is (9Z)-octadecenoyl-[ACP] + H2O = (9Z)-octadecenoate + holo-[ACP] + H(+). The protein operates within secondary metabolite biosynthesis. In terms of biological role, fatty acid synthase beta subunit; part of the gene cluster that mediates the biosynthesis of aspercryptins, linear lipopeptides built from six amino acids including 2 highly unusual and nonproteogenic amino acids, 2-amino-octanoic acid (2aoa) and 2-amino-dodecanol (2adol). The core structure of aspercryptins is as follows: Ser/Ala-Thr-Ile/Val-2aoa-Asn-2adol. The first step of aspercryptin biosynthesis is the generation of the fatty acid precursors, octanoic and dodecanoic acids, by the FAS subunits atnF and atnM. The fatty acid precursors are likely transformed into the corresponding alpha-amino fatty acids in three steps. First, they are hydroxylated by the cytochrome P450 monooxygenase atnE, then oxidized to the corresponding alpha-keto acids by the NAD(P)-dependent oxidoreductase atnD, and finally converted to the alpha-amino fatty acids by the PLP-dependent aminotransferases atnH or atnJ. the alpha-amino fatty acids, 2-amino-octanoic and 2-amino-dodecanoic acids, are recognized, activated, and covalently tethered to the NRPS atnA by its fourth and sixth adenylation domains. The second module of atnA is the Thr module and contains an epimerase (E) domain responsible for the epimerization of Thr to D-allo-Thr. Additionally, despite atnA having only one epimerase domain, the first amino acid of aspercryptin A1 is D-Ser, suggesting that serine is either loaded directly as D-Ser on the first module or that the epimerase domain in the threonine module epimerizes both L-Ser and L-Thr. After condensation of the hexapeptide of aspercryptin, the C-terminal reductase (TE) domain might be involved in the reductive release and production of the aldehyde hexapeptide. Further reduction would generate aspercryptins. The variety of aspercryptins produced reflects the flexibility of the atnA NRPS, allowing incorporation of alanine instead of serine, valine for isoleucine, and a C10 fatty amino alcohol instead of the C12 version. AtnB seems to be involved in the selectivity for Ile versus Val by the third module. Moreover, type B, C and D aspercryptins have an additional N-terminal cichorine, acetyl and propionyl group respectively. The sequence is that of Fatty acid synthase beta subunit aflB from Emericella nidulans (strain FGSC A4 / ATCC 38163 / CBS 112.46 / NRRL 194 / M139) (Aspergillus nidulans).